Here is an 83-residue protein sequence, read N- to C-terminus: U5-theraphotoxin-Hs1b 1 (83 aa).

An N-terminal signal peptide occupies residues 1 to 21; the sequence is MKTSMFLTLTGLVLLFVVCYA. Residues 22–49 constitute a propeptide that is removed on maturation; it reads SESEEKEFPKELLSSIFAADSDFKEEER. 3 cysteine pairs are disulfide-bonded: cysteine 51/cysteine 63, cysteine 56/cysteine 68, and cysteine 62/cysteine 75.

This sequence belongs to the neurotoxin 10 (Hwtx-1) family. 51 (Hntx-8) subfamily. Hntx-8 sub-subfamily. Expressed by the venom gland.

The protein resides in the secreted. Weakly inhibits 5HT3A receptors and Kv1.3/KCNA3 voltage-gated potassium channels. Agglutinates erythrocytes. The polypeptide is U5-theraphotoxin-Hs1b 1 (Cyriopagopus schmidti (Chinese bird spider)).